A 198-amino-acid chain; its full sequence is Cell division protein SepF (198 aa).

The tract at residues 170–198 (EVPQPPARPARPASTNPPAWGNETNRMAQ) is disordered. The span at 179-188 (ARPASTNPPA) shows a compositional bias: low complexity.

The protein belongs to the SepF family. As to quaternary structure, homodimer. Interacts with FtsZ.

The protein localises to the cytoplasm. In terms of biological role, cell division protein that is part of the divisome complex and is recruited early to the Z-ring. Probably stimulates Z-ring formation, perhaps through the cross-linking of FtsZ protofilaments. Its function overlaps with FtsA. In Nostoc sp. (strain PCC 7120 / SAG 25.82 / UTEX 2576), this protein is Cell division protein SepF.